A 1587-amino-acid chain; its full sequence is Mediator of RNA polymerase II transcription subunit 23 (1587 aa).

Disordered regions lie at residues 1374 to 1484 (SQSE…QLQH) and 1567 to 1587 (QHQQ…QQPH). The segment covering 1385-1404 (PPEKEKSPEKEKEQEQEQHV) has biased composition (basic and acidic residues). Residues 1387–1404 (EKEKSPEKEKEQEQEQHV) form an acidic region. Polar residues predominate over residues 1410–1426 (LESTPSVSSLPQMQHHL). Over residues 1430–1450 (PLLPSHQMMPPPQQHSSSLQH) the composition is skewed to low complexity. The segment covering 1463–1484 (DTSQHQTIQQQSNHPTQQQLQH) has biased composition (polar residues). Residues 1567–1576 (QHQQYMQQQQ) are compositionally biased toward low complexity. Basic residues predominate over residues 1577–1587 (QHHHQHQQQPH).

It belongs to the Mediator complex subunit 23 family. Component of the Mediator complex. Interacts with let-19/mdt-13.

The protein localises to the nucleus. Functionally, component of the Mediator complex, a coactivator involved in regulated gene transcription of nearly all RNA polymerase II-dependent genes. Mediator functions as a bridge to convey information from gene-specific regulatory proteins to the basal RNA polymerase II transcription machinery. Mediator is recruited to promoters by direct interactions with regulatory proteins and serves as a scaffold for the assembly of a functional pre-initiation complex with RNA polymerase II and the general transcription factors. Functions downstream of receptor let-23 and let-60/Ras during vulval induction likely by down-regulating the expression of phosphatase dep-1 and lin-12/Notch in vulva precursor cell descendants with a primary cell fate. Acts to repress beta-catenin target genes. Required for asymmetric division of T-cells. Plays a role in responses to M.nematophilum-mediated bacterial infection by promoting tail swelling and preventing constipation. The polypeptide is Mediator of RNA polymerase II transcription subunit 23 (sur-2) (Caenorhabditis elegans).